A 363-amino-acid chain; its full sequence is tRNA dimethylallyltransferase (363 aa).

65–72 (GPTASGKS) is a binding site for ATP. 67–72 (TASGKS) serves as a coordination point for substrate. Interaction with substrate tRNA regions lie at residues 90-93 (DSMQ) and 214-218 (QRLIR).

Belongs to the IPP transferase family. In terms of assembly, monomer. Mg(2+) serves as cofactor.

The catalysed reaction is adenosine(37) in tRNA + dimethylallyl diphosphate = N(6)-dimethylallyladenosine(37) in tRNA + diphosphate. Catalyzes the transfer of a dimethylallyl group onto the adenine at position 37 in tRNAs that read codons beginning with uridine, leading to the formation of N6-(dimethylallyl)adenosine (i(6)A). This chain is tRNA dimethylallyltransferase, found in Rickettsia massiliae (strain Mtu5).